Consider the following 641-residue polypeptide: Chaperone protein DnaK (641 aa).

The residue at position 200 (Thr-200) is a Phosphothreonine; by autocatalysis. A compositionally biased stretch (low complexity) spans 606–623 (AEQGGNADAASGNAQASK). The interval 606–628 (AEQGGNADAASGNAQASKAADDV) is disordered.

It belongs to the heat shock protein 70 family.

Its function is as follows. Acts as a chaperone. This is Chaperone protein DnaK from Xanthomonas axonopodis pv. citri (strain 306).